A 439-amino-acid polypeptide reads, in one-letter code: Cysteine--tRNA ligase (439 aa).

A Zn(2+)-binding site is contributed by C26. Residues 28-38 carry the 'HIGH' region motif; sequence PTVYNHVHIGN. Zn(2+) is bound by residues C206, H231, and E235. Positions 263–267 match the 'KMSKS' region motif; the sequence is KMSKS. K266 serves as a coordination point for ATP.

The protein belongs to the class-I aminoacyl-tRNA synthetase family. As to quaternary structure, monomer. Zn(2+) is required as a cofactor.

The protein localises to the cytoplasm. The enzyme catalyses tRNA(Cys) + L-cysteine + ATP = L-cysteinyl-tRNA(Cys) + AMP + diphosphate. The polypeptide is Cysteine--tRNA ligase (Malacoplasma penetrans (strain HF-2) (Mycoplasma penetrans)).